Reading from the N-terminus, the 193-residue chain is Spermatogenesis-associated protein 3 (193 aa).

Basic residues predominate over residues 1-16 (MKKVKKKKSDSRRRRN). The segment at 1–92 (MKKVKKKKSD…SPFLVPMEPK (92 aa)) is disordered. Residues 17 to 35 (SISPQTSSDSSQQPSSETP) are compositionally biased toward low complexity. The segment covering 36-48 (PSCPEPASPPSKP) has biased composition (pro residues).

As to expression, strongly expressed in testis. Faintly expressed in epididymis, ovary, spleen, kidney, lung, heart, brain, epididymis, liver and skeletal muscle.

The protein resides in the cell projection. It is found in the cilium. The protein localises to the flagellum. The polypeptide is Spermatogenesis-associated protein 3 (Spata3) (Mus musculus (Mouse)).